A 153-amino-acid polypeptide reads, in one-letter code: Ribonuclease H (153 aa).

The RNase H type-1 domain occupies 1–142; it reads MTDQIEIFTD…ADELARRGVD (142 aa). Mg(2+)-binding residues include Asp-10, Glu-48, Asp-70, and Asp-134.

The protein belongs to the RNase H family. In terms of assembly, monomer. Mg(2+) serves as cofactor.

It is found in the cytoplasm. The enzyme catalyses Endonucleolytic cleavage to 5'-phosphomonoester.. Its function is as follows. Endonuclease that specifically degrades the RNA of RNA-DNA hybrids. The sequence is that of Ribonuclease H from Aromatoleum aromaticum (strain DSM 19018 / LMG 30748 / EbN1) (Azoarcus sp. (strain EbN1)).